A 746-amino-acid chain; its full sequence is Chitin biosynthesis protein CHS6 (746 aa).

Positions 1–25 (MNLFWPSETKKQNEIPGGDYTPGNS) are disordered. A CHS5-binding region spans residues 734–746 (LAWIADLDHTVQP).

It belongs to the CHAPS family. As to quaternary structure, component of the CHS5/6 complex composed of the 4 CHAPS proteins BCH1, BCH2, BUD7, and CHS6 as well as at least CHS5 and GTP-bound ARF1. The complex interacts with the cargo protein CHS3.

It is found in the golgi apparatus. The protein localises to the trans-Golgi network membrane. Functionally, member of the CHS5-ARF1P-binding proteins (CHAPS) which mediates export of specific cargo proteins, including chitin synthase CHS3. In Saccharomyces cerevisiae (strain ATCC 204508 / S288c) (Baker's yeast), this protein is Chitin biosynthesis protein CHS6 (CHS6).